Reading from the N-terminus, the 574-residue chain is Cytochrome P450 4g15 (574 aa).

The disordered stretch occupies residues 288–327 (REREQNGGVDQTPSTAGSDEKDREKDKEKASPVAGLSYGQ). A compositionally biased stretch (polar residues) spans 295–304 (GVDQTPSTAG). Residues 305-317 (SDEKDREKDKEKA) are compositionally biased toward basic and acidic residues. Residues Glu379 and Cys519 each contribute to the heme site.

It belongs to the cytochrome P450 family. Heme serves as cofactor. In terms of tissue distribution, expressed in larval brain cortex cells and ring glands and weakly in larval digestive system and adult nervous system.

The protein localises to the endoplasmic reticulum membrane. It is found in the microsome membrane. Probably involved in steroid hormones biosynthesis. In Drosophila melanogaster (Fruit fly), this protein is Cytochrome P450 4g15 (Cyp4g15).